A 531-amino-acid chain; its full sequence is 4-hydroxyphenylacetaldehyde oxime monooxygenase (531 aa).

Residues 18–38 (WQTCLLVLLPVLLVSYYLLTS) traverse the membrane as a helical segment. Heme b is bound by residues Arg122, Arg151, Arg466, and Cys468.

It belongs to the cytochrome P450 family. The cofactor is heme b.

It localises to the endoplasmic reticulum membrane. It catalyses the reaction (E)-4-hydroxyphenylacetaldehyde oxime + reduced [NADPH--hemoprotein reductase] + O2 = (S)-4-hydroxymandelonitrile + oxidized [NADPH--hemoprotein reductase] + 2 H2O + H(+). It carries out the reaction (E)-4-hydroxyphenylacetaldehyde oxime = (Z)-(4-hydroxyphenyl)acetaldehyde oxime. The catalysed reaction is (Z)-(4-hydroxyphenyl)acetaldehyde oxime = 4-hydroxyphenylacetonitrile + H2O. The enzyme catalyses 4-hydroxyphenylacetonitrile + reduced [NADPH--hemoprotein reductase] + O2 = (S)-4-hydroxymandelonitrile + oxidized [NADPH--hemoprotein reductase] + H2O + H(+). It participates in secondary metabolite biosynthesis; dhurrin biosynthesis; dhurrin from L-tyrosine: step 2/3. In terms of biological role, cytochrome P450 involved in the biosynthesis of the cyanogenic glucoside dhurrin. Catalyzes the conversion of p-hydroxyphenylacetaldoxime to p-hydroxymandelonitrile via three different and successive activities: isomerization of the (E) isomer to the (Z) isomer of p-hydroxyphenylacetaldoxime, followed by dehydration of the oxime to the corresponding nitrile, and C-hydroxylation of the nitrile to produce p-hydroxymandelonitrile. The chain is 4-hydroxyphenylacetaldehyde oxime monooxygenase from Sorghum bicolor (Sorghum).